The sequence spans 117 residues: UPF0122 protein TTE1463 (117 aa).

It belongs to the UPF0122 family.

Might take part in the signal recognition particle (SRP) pathway. This is inferred from the conservation of its genetic proximity to ftsY/ffh. May be a regulatory protein. This is UPF0122 protein TTE1463 from Caldanaerobacter subterraneus subsp. tengcongensis (strain DSM 15242 / JCM 11007 / NBRC 100824 / MB4) (Thermoanaerobacter tengcongensis).